We begin with the raw amino-acid sequence, 426 residues long: Phosphoribosylamine--glycine ligase (426 aa).

Residues 109-312 form the ATP-grasp domain; it reads KEVMEAAGVA…LAGVLNAVAT (204 aa). Residue 138–193 participates in ATP binding; it reads LDYFGPMYVVKDDGLAAGKGVVVTADRAEARQHIHLVHAAGNPVLLESFLDGPEVS. 2 residues coordinate Mg(2+): glutamate 282 and asparagine 284.

Belongs to the GARS family. Requires Mg(2+) as cofactor. Mn(2+) serves as cofactor.

The catalysed reaction is 5-phospho-beta-D-ribosylamine + glycine + ATP = N(1)-(5-phospho-beta-D-ribosyl)glycinamide + ADP + phosphate + H(+). It participates in purine metabolism; IMP biosynthesis via de novo pathway; N(1)-(5-phospho-D-ribosyl)glycinamide from 5-phospho-alpha-D-ribose 1-diphosphate: step 2/2. This chain is Phosphoribosylamine--glycine ligase, found in Corynebacterium ammoniagenes (Brevibacterium ammoniagenes).